Consider the following 425-residue polypeptide: UPF0597 protein KPN78578_43500 (425 aa).

The protein belongs to the UPF0597 family.

The polypeptide is UPF0597 protein KPN78578_43500 (Klebsiella pneumoniae subsp. pneumoniae (strain ATCC 700721 / MGH 78578)).